The sequence spans 874 residues: MDYNVKDFGALGDGVSDDRVAIQAAIDAAHAAGGGTVYLPPGEYRVSAAGEPSDGCLTLRDNVYLAGAGMGQTVIKLVDGSAQKITGIVRSPFGEETSNFGMRDLTLDGNRANTVDKVDGWFNGYAPGQPGADRNVTIERVEVREMSGYGFDPHEQTINLVLRDSVAHHNGLDGFVADYQIGGTFENNVAYANDRHGFNIVTSTNDFVMRNNVAYGNGGNGLVVQRGSENLAHPENILIDGGSYYDNGLEGVLVKMSNNVTVQNADIHGNGSSGVRVYGAQGVQILGNQIHDNAKTAVAPEVLLQSYDDTLGVSGNYYTTLNTRVEGNTITGSANSTYGVQERNDGTDFSSLVGNTINGVQEAAHLYGPNSTVSGTVSAPPQGTDGNDVLIGSDVGEQISGGAGDDRLDGGAGDDLLDGGAGRDRLTGGLGADTFRFALREDSHRSPLGTFSDLILDFDPSQDKIDVSALGFIGLGNGYAGTLAVSLSADGLRTYLKSYDADAQGRSFELALDGNHAATLSAGNIVFAAATPVDPSAEAQPIVGSDLDDQLHGTLLGEEISGGGGADQLYGYGGGDLLDGGAGRDRLTGGEGADTFRFALREDSHRSAAGTFSDLILDFDPTQDKLDVSALGFTGLGNGYAGTLAVSVSDDGTRTYLKSYETDAEGRSFEVSLQGNHAAALSADNILFATPVPVDPGVEGTPVVGSDLDDELHGTLGSEQILGGGGADQLYGYAGNDLLDGGAGRDKLSGGEGADTFRFALREDSHRSPLGTFGDRILDFDPSQDRIDVSALGFSGLGNGYAGSLAVSVSDDGTRTYLKSYEADAQGLSFEVALEGDHAAALSADNIVFAATDAAAAGELGVIGASGQPDDPAV.

PbH1 repeat units follow at residues 133–155 (DRNV…DPHE), 157–179 (TINL…VADY), 180–202 (QIGG…NIVT), 204–226 (TNDF…VVQR), 234–256 (PENI…LVKM), 257–279 (SNNV…RVYG), 280–302 (AQGV…APEV), and 320–351 (TLNT…DFSS). 7 Hemolysin-type calcium-binding repeats span residues 383-394 (GTDGNDVLIGSD), 401-417 (GGAG…DDLL), 419-435 (GGAG…ADTF), 562-578 (GGGG…GDLL), 580-596 (GGAG…ADTF), 723-739 (GGGG…NDLL), and 741-757 (GGAG…ADTF). The disordered stretch occupies residues 401–420 (GGAGDDRLDGGAGDDLLDGG).

The protein belongs to the D-mannuronate C5-epimerase family. Ca(2+) is required as a cofactor.

Its subcellular location is the secreted. The enzyme catalyses [(1-&gt;4)-beta-D-mannuronosyl](n) = [alginate](n). Its pathway is glycan biosynthesis; alginate biosynthesis. Inhibited by zinc. Converts beta-D-mannuronic acid (M) to alpha-L-guluronic acid (G), producing a polymer with gel-forming capacity, required for the formation of the cyst coat. This is Mannuronan C5-epimerase AlgE6 from Azotobacter vinelandii.